A 355-amino-acid polypeptide reads, in one-letter code: UDP-N-acetylglucosamine--N-acetylmuramyl-(pentapeptide) pyrophosphoryl-undecaprenol N-acetylglucosamine transferase (355 aa).

UDP-N-acetyl-alpha-D-glucosamine contacts are provided by residues 14-16 (TGG), Asn-123, Arg-164, Ser-190, and Gln-284.

This sequence belongs to the glycosyltransferase 28 family. MurG subfamily.

The protein localises to the cell inner membrane. It carries out the reaction di-trans,octa-cis-undecaprenyl diphospho-N-acetyl-alpha-D-muramoyl-L-alanyl-D-glutamyl-meso-2,6-diaminopimeloyl-D-alanyl-D-alanine + UDP-N-acetyl-alpha-D-glucosamine = di-trans,octa-cis-undecaprenyl diphospho-[N-acetyl-alpha-D-glucosaminyl-(1-&gt;4)]-N-acetyl-alpha-D-muramoyl-L-alanyl-D-glutamyl-meso-2,6-diaminopimeloyl-D-alanyl-D-alanine + UDP + H(+). It participates in cell wall biogenesis; peptidoglycan biosynthesis. Cell wall formation. Catalyzes the transfer of a GlcNAc subunit on undecaprenyl-pyrophosphoryl-MurNAc-pentapeptide (lipid intermediate I) to form undecaprenyl-pyrophosphoryl-MurNAc-(pentapeptide)GlcNAc (lipid intermediate II). The chain is UDP-N-acetylglucosamine--N-acetylmuramyl-(pentapeptide) pyrophosphoryl-undecaprenol N-acetylglucosamine transferase from Synechocystis sp. (strain ATCC 27184 / PCC 6803 / Kazusa).